Here is a 397-residue protein sequence, read N- to C-terminus: Elongation factor Tu (397 aa).

The region spanning 10–207 (KPHVNIGTIG…AVDESIPEPV (198 aa)) is the tr-type G domain. Residues 19-26 (GHVDHGKT) are G1. 19–26 (GHVDHGKT) is a binding site for GTP. Thr26 lines the Mg(2+) pocket. The segment at 63 to 67 (GITIN) is G2. Residues 84–87 (DAPG) are G3. GTP-binding positions include 84–88 (DAPGH) and 139–142 (NKSD). Residues 139–142 (NKSD) are G4. A G5 region spans residues 177-179 (SGL).

Belongs to the TRAFAC class translation factor GTPase superfamily. Classic translation factor GTPase family. EF-Tu/EF-1A subfamily. As to quaternary structure, monomer.

The protein localises to the cytoplasm. It catalyses the reaction GTP + H2O = GDP + phosphate + H(+). In terms of biological role, GTP hydrolase that promotes the GTP-dependent binding of aminoacyl-tRNA to the A-site of ribosomes during protein biosynthesis. In Clavibacter sepedonicus (Clavibacter michiganensis subsp. sepedonicus), this protein is Elongation factor Tu.